A 371-amino-acid chain; its full sequence is MYKNYYSNTEVYKKHKDSGSLRKKALRSRRSSFFSFFNDSSSSNGNEFIGFRRFAKAYLFGREIGSCGTDSYTPVGANVNKRRLKKEDKNDQQLWKRQHHSQGCFFPIDDDSNKQTEAAVNKFYENGEYVNQDLIFKGKVYSEESEVVDEKTAGSQNPALLKTRSISLNDIPRGTGISSVLSQVRGGSLERIIVYRYDTPERSLHKVDLFFLNYEGAQSFMRYAKTNIFKVNGVQLKPEWIFLESTYENIMKEQSVNRIIEEEKFISRCLIVKKSSTTAMPNKSNLNKGQTLENIDIQELEKDFQNFGEVLEITPIVSRKLCVSIFFYDISSAMRAMEEYEQKGSYLYNKYFKTWTIWYGKDITDQPCIDL.

It localises to the spore wall. Essential for sporulation and seems to have a role at the time of, or after, initiation of nuclear division. Appears to have a role in outer spore wall formation. This is Sporulation-specific protein 2 (SSP2) from Saccharomyces cerevisiae (strain ATCC 204508 / S288c) (Baker's yeast).